The chain runs to 118 residues: Peptidyl-tRNA hydrolase (118 aa).

It belongs to the PTH2 family.

The protein resides in the cytoplasm. The catalysed reaction is an N-acyl-L-alpha-aminoacyl-tRNA + H2O = an N-acyl-L-amino acid + a tRNA + H(+). Its function is as follows. The natural substrate for this enzyme may be peptidyl-tRNAs which drop off the ribosome during protein synthesis. This Thermococcus onnurineus (strain NA1) protein is Peptidyl-tRNA hydrolase.